Reading from the N-terminus, the 394-residue chain is Dihydroorotase (394 aa).

Zn(2+) contacts are provided by His-15, His-17, Lys-98, His-135, His-175, and Asp-245. At Lys-98 the chain carries N6-carboxylysine.

Belongs to the metallo-dependent hydrolases superfamily. DHOase family. Class II DHOase subfamily. Requires Zn(2+) as cofactor.

The enzyme catalyses (S)-dihydroorotate + H2O = N-carbamoyl-L-aspartate + H(+). It participates in pyrimidine metabolism; UMP biosynthesis via de novo pathway; (S)-dihydroorotate from bicarbonate: step 3/3. This is Dihydroorotase (PYR3) from Mycosarcoma maydis (Corn smut fungus).